The sequence spans 441 residues: 4-hydroxybenzoate polyprenyltransferase, mitochondrial (441 aa).

The transit peptide at 1–95 directs the protein to the mitochondrion; sequence MLRKLTSNSS…TLGELVLRDY (95 aa). 8 helical membrane passes run 129-149, 154-174, 204-224, 225-245, 246-266, 271-291, 322-342, and 378-398; these read IGSW…APAG, LWTL…GCTI, AWFF…ELNW, YSIV…LMKR, ITHW…LLGW, GSVM…WTIV, LWLS…GMVC, and FISN…GTLY. Residues 405 to 441 form a disordered region; sequence AGKSSTTSSSSTSSSSSPSSGLLLAATNHHQPARQAS. Over residues 408–424 the composition is skewed to low complexity; that stretch reads SSTTSSSSTSSSSSPSS. Polar residues predominate over residues 432–441; sequence NHHQPARQAS.

Belongs to the UbiA prenyltransferase family. Requires Mg(2+) as cofactor.

It is found in the mitochondrion inner membrane. The enzyme catalyses an all-trans-polyprenyl diphosphate + 4-hydroxybenzoate = a 4-hydroxy-3-(all-trans-polyprenyl)benzoate + diphosphate. The protein operates within cofactor biosynthesis; ubiquinone biosynthesis. Its function is as follows. Catalyzes the prenylation of para-hydroxybenzoate (PHB) with an all-trans polyprenyl group. Mediates the second step in the final reaction sequence of coenzyme Q (CoQ) biosynthesis, which is the condensation of the polyisoprenoid side chain with PHB, generating the first membrane-bound Q intermediate. This is 4-hydroxybenzoate polyprenyltransferase, mitochondrial from Aedes aegypti (Yellowfever mosquito).